The following is a 461-amino-acid chain: Piperine synthase (461 aa).

Residues histidine 168 and aspartate 387 each act as proton acceptor in the active site. Residues 459–461 carry the Microbody targeting signal motif; the sequence is SRM.

It belongs to the plant acyltransferase family. Monomer. Confined to immature fruits perisperm. Also detectable in roots.

The protein resides in the cytoplasm. It catalyses the reaction piperidine + (E,E)-piperoyl-CoA = piperine + CoA + H(+). It carries out the reaction pyrrolidine + (E,E)-piperoyl-CoA = piperyline + CoA + H(+). The catalysed reaction is (E,E)-piperoyl-CoA + 2-methylpropan-1-amine = (E,E)-piperlonguminine + CoA + H(+). It functions in the pathway aromatic compound metabolism. Its function is as follows. Involved in the biosynthesis of aromatic piperamides natural products such as piperine (1-piperoyl-piperidine), the pungent principle contributing, together with several terpenoids, to the aromatic properties of black pepper fruits, and displaying numerous pharmacological activities such as antiproliferative, antitumor, antiangiogenesis, antioxidant, antidiabetic, antiobesity, cardioprotective, antimicrobial, antiaging, and immunomodulatory effects. Mediates mainly the conversion of piperidine and piperoyl-CoA to piperine. Can also use pyrrolidine and isobutylamine as acceptors and 3,4-methylenedioxycinnamoyl-CoA as an alternative CoA-donor with a lower efficiency. The sequence is that of Piperine synthase from Piper nigrum (Black pepper).